The primary structure comprises 455 residues: Phosphomethylpyrimidine synthase (455 aa).

Substrate-binding positions include Asn-80, Met-109, Tyr-139, His-175, 195-197 (SRG), 236-239 (DALR), and Glu-275. Position 279 (His-279) interacts with Zn(2+). Tyr-302 is a substrate binding site. Residue His-343 coordinates Zn(2+). Residues Cys-423, Cys-426, and Cys-431 each coordinate [4Fe-4S] cluster.

The protein belongs to the ThiC family. [4Fe-4S] cluster serves as cofactor.

The catalysed reaction is 5-amino-1-(5-phospho-beta-D-ribosyl)imidazole + S-adenosyl-L-methionine = 4-amino-2-methyl-5-(phosphooxymethyl)pyrimidine + CO + 5'-deoxyadenosine + formate + L-methionine + 3 H(+). The protein operates within cofactor biosynthesis; thiamine diphosphate biosynthesis. Its function is as follows. Catalyzes the synthesis of the hydroxymethylpyrimidine phosphate (HMP-P) moiety of thiamine from aminoimidazole ribotide (AIR) in a radical S-adenosyl-L-methionine (SAM)-dependent reaction. The chain is Phosphomethylpyrimidine synthase from Synechococcus sp. (strain JA-3-3Ab) (Cyanobacteria bacterium Yellowstone A-Prime).